The sequence spans 481 residues: Cardiolipin synthase A (481 aa).

The next 2 membrane-spanning stretches (helical) occupy residues 10-30 and 40-60; these read FFGYLLGLIHLLGIVAALHAL and IAWAMPLLFIPYLTLIPYLIF. PLD phosphodiesterase domains lie at 220–247 and 394–421; these read VNFRNHRKIVVVDGLLGFIGGHNVGDEY and QPGFLHQKVVLVDDDVSAIGSANLDNRS. Active-site residues include histidine 225, lysine 227, aspartate 232, histidine 399, lysine 401, and aspartate 406.

The protein belongs to the phospholipase D family. Cardiolipin synthase subfamily. ClsA sub-subfamily.

Its subcellular location is the cell inner membrane. The catalysed reaction is 2 a 1,2-diacyl-sn-glycero-3-phospho-(1'-sn-glycerol) = a cardiolipin + glycerol. Functionally, catalyzes the reversible phosphatidyl group transfer from one phosphatidylglycerol molecule to another to form cardiolipin (CL) (diphosphatidylglycerol) and glycerol. This Pseudomonas putida (strain ATCC 47054 / DSM 6125 / CFBP 8728 / NCIMB 11950 / KT2440) protein is Cardiolipin synthase A.